The chain runs to 219 residues: Maleylacetoacetate isomerase (219 aa).

A GST N-terminal domain is found at 4-87 (NKTVLYSYWR…YLEETHPENP (84 aa)). Residues 14–19 (SSCSWR), Q45, 71–72 (QS), Q111, and 115–117 (NLK) contribute to the glutathione site. The GST C-terminal domain maps to 92 to 217 (GSYERAIARQ…LPQNQPDAEP (126 aa)).

It belongs to the GST superfamily. Zeta family. Glutathione serves as cofactor.

The catalysed reaction is 4-maleylacetoacetate = 4-fumarylacetoacetate. It functions in the pathway amino-acid degradation; L-phenylalanine degradation; acetoacetate and fumarate from L-phenylalanine: step 5/6. The sequence is that of Maleylacetoacetate isomerase (mai) from Dictyostelium discoideum (Social amoeba).